Here is a 291-residue protein sequence, read N- to C-terminus: Homeobox protein knotted-1-like 7 (291 aa).

Residues 194-214 form the ELK domain; the sequence is ELKLELKQGFKSRIEDVREEI. Positions 215–278 form a DNA-binding region, homeobox; TALE-type; the sequence is MRKRRAGKLP…NQRKRNWHNN (64 aa).

The protein belongs to the TALE/KNOX homeobox family. In terms of assembly, may form heterodimeric complex with the TALE/BELL proteins. Interacts with OFP1, OFP2, OFP3, OFP4 and OFP6.

The protein localises to the nucleus. Functionally, may be involved in secondary cell wall biosynthesis. In Arabidopsis thaliana (Mouse-ear cress), this protein is Homeobox protein knotted-1-like 7 (KNAT7).